The chain runs to 252 residues: MKQKVLIAALFLVAYLGFLLVKLPATLVVRHLPLPPNLVQLEGVSGTLWSGQVARLQYASESLTQLRWELNGWSLLRFAPEVSLRFGDRSGLNGQGVVGWNGAAFGRDITLNVPAPWVLDRVPMRLPFPLTVAGQLQLKVDQFAQGNPWCDNLYGNLHWYGADADTPAGKLPLGDPELKLTCIDSRLVAELKQGSEAVQVLGKLELQPNRQYLFQGTLKPGPELPDQMKQGLPFLGQPDGQGRFPLRYQGRI.

Residues 1-4 lie on the Cytoplasmic side of the membrane; it reads MKQK. Residues 5 to 25 form a helical membrane-spanning segment; that stretch reads VLIAALFLVAYLGFLLVKLPA. Over 26-252 the chain is Periplasmic; sequence TLVVRHLPLP…RFPLRYQGRI (227 aa).

The protein belongs to the GSP N family.

It localises to the cell inner membrane. Functionally, involved in a type II secretion system (T2SS, formerly general secretion pathway, GSP) for the export of proteins. The protein is Type II secretion system protein N (exeN) of Aeromonas hydrophila.